The primary structure comprises 443 residues: Xaa-Pro dipeptidase (443 aa).

Positions 246, 257, 339, 384, and 423 each coordinate Mn(2+).

This sequence belongs to the peptidase M24B family. Bacterial-type prolidase subfamily. Mn(2+) is required as a cofactor.

The catalysed reaction is Xaa-L-Pro dipeptide + H2O = an L-alpha-amino acid + L-proline. Splits dipeptides with a prolyl residue in the C-terminal position. In Shigella dysenteriae serotype 1 (strain Sd197), this protein is Xaa-Pro dipeptidase.